A 613-amino-acid chain; its full sequence is Putative adenosylhomocysteinase 3 (613 aa).

Composition is skewed to low complexity over residues 1–14 (MSVQ…AAKV) and 35–44 (AAAVGAMVPP). A disordered region spans residues 1–186 (MSVQVVSAAA…KQQKNSKGSS (186 aa)). Residue serine 2 is modified to N-acetylserine. Residues 2-111 (SVQVVSAAAA…DGGEALVSPD (110 aa)) are LISN domain, inhibits interaction with ITPR1. Over residues 52-68 (APAPAPAAERPPAPGPG) the composition is skewed to pro residues. The span at 70-80 (GPTAALSPAAG) shows a compositional bias: low complexity. At serine 109 the chain carries Phosphoserine. Basic residues predominate over residues 137-146 (RPTKIGRRSL). Low complexity predominate over residues 147–166 (SRSISQSSTDSYSSAASYTD). Phosphoserine occurs at positions 151, 154, 157, and 160. Positions 238, 312, and 337 each coordinate substrate. NAD(+) is bound at residue 338–340 (SVT). Positions 367 and 371 each coordinate substrate. Residues asparagine 372, 403-408 (GEVGKG), glutamate 424, asparagine 459, 480-482 (MGH), and asparagine 527 each bind NAD(+).

This sequence belongs to the adenosylhomocysteinase family. In terms of assembly, homotetramer. Forms heteromultimers with AHCYL1 (via the C-terminal region). Interacts with ITPR1; with lower affinity than AHCYL1 and maybe via ITPR1. Interacts with SLC4A4. Interacts with ZCCHC4. Requires NAD(+) as cofactor. Phosphorylated during neuronal differentiation at the LISN domain. In terms of tissue distribution, highly expressed in cerebrum, cerebellum and kidney. Also expressed in thymus, spleen, testis, ovary and, at lower, levels in lung and liver (at protein level). In cerebellum, expressed in interneurons.

Its subcellular location is the cytoplasm. The protein resides in the microsome. The enzyme catalyses S-adenosyl-L-homocysteine + H2O = L-homocysteine + adenosine. It functions in the pathway amino-acid biosynthesis; L-homocysteine biosynthesis; L-homocysteine from S-adenosyl-L-homocysteine: step 1/1. May regulate the electrogenic sodium/bicarbonate cotransporter SLC4A4 activity and Mg(2+)-sensitivity. On the contrary of its homolog AHCYL1, does not regulate ITPR1 sensitivity to inositol 1,4,5-trisphosphate. The protein is Putative adenosylhomocysteinase 3 (Ahcyl2) of Mus musculus (Mouse).